The following is a 374-amino-acid chain: DNA primase small subunit PriS (374 aa).

Catalysis depends on residues aspartate 99, aspartate 101, and aspartate 281.

This sequence belongs to the eukaryotic-type primase small subunit family. In terms of assembly, heterodimer of a small subunit (PriS) and a large subunit (PriL). Mg(2+) is required as a cofactor. It depends on Mn(2+) as a cofactor.

In terms of biological role, catalytic subunit of DNA primase, an RNA polymerase that catalyzes the synthesis of short RNA molecules used as primers for DNA polymerase during DNA replication. The small subunit contains the primase catalytic core and has DNA synthesis activity on its own. Binding to the large subunit stabilizes and modulates the activity, increasing the rate of DNA synthesis while decreasing the length of the DNA fragments, and conferring RNA synthesis capability. The DNA polymerase activity may enable DNA primase to also catalyze primer extension after primer synthesis. May also play a role in DNA repair. This is DNA primase small subunit PriS from Methanoregula boonei (strain DSM 21154 / JCM 14090 / 6A8).